The primary structure comprises 30 residues: Cyclotide mech-1 (30 aa).

Residues 1–30 (GVIPCGESCVFIPCINKKKCSCKNKVCYRD) constitute a cross-link (cyclopeptide (Gly-Asp)). Intrachain disulfides connect cysteine 5-cysteine 20, cysteine 9-cysteine 22, and cysteine 14-cysteine 27.

In terms of processing, this is a cyclic peptide. Post-translationally, contains 3 disulfide bonds.

Probably participates in a plant defense mechanism (Potential). Binds to and induces leakage in phospholipd membranes, particularly ones containing 1-palmitoyl-2-oleophosphatidylethanolamine (POPE). Not active against Gram-negative bacterium E.coli ATCC 25922 or Gram-positive bacterium S.aureus ATCC 25923 up to a concentration of 64 uM. This is Cyclotide mech-1 from Melicytus chathamicus (Chatham Island mahoe).